The chain runs to 37 residues: Large ribosomal subunit protein bL36c (37 aa).

The protein belongs to the bacterial ribosomal protein bL36 family.

Its subcellular location is the plastid. It localises to the chloroplast. This is Large ribosomal subunit protein bL36c from Pinus koraiensis (Korean pine).